A 676-amino-acid chain; its full sequence is MGVTGILQLPRDRFKRTSFFLWVIILFQRTFSIPLGVIHNSTLQVSDVDKLVCRDKLSSTNQLRSVGLNLEGNGVATDVPSATKRWGFRSGVPPKVVNYEAGEWAENCYNLEIKKPDGSECLPAAPDGIRGFPRCRYVHKVSGTGPCAGDFAFHKEGAFFLYDRLASTVIYRGTTFAEGVVAFLILPQAKKDFFSSHPLREPVNATEDPSSGYYSTTIRYQATGFGTNETEYLFEVDNLTYVQLESRFTPQFLLQLNETIYTSGKRSNTTGKLIWKVNPEIDTTIGEWAFWETKKNLTRKIRSEELSFTAVSNRAKNISGQSPARTSSDPGTNTTTEDHKIMASENSSAMVQVHSQGREAAVSHLTTLATISTSPQPPTTKPGPDNSTHNTPVYKLDISEATQVEQHHRRTDNDSTASDTPPATTAAGPLKAENTNTSKGTDLLDPATTTSPQNHSETAGNNNTHHQDTGEESASSGKLGLITNTIAGVAGLITGGRRARREAIVNAQPKCNPNLHYWTTQDEGAAIGLAWIPYFGPAAEGIYTEGLMHNQDGLICGLRQLANETTQALQLFLRATTELRTFSILNRKAIDFLLQRWGGTCHILGPDCCIEPHDWTKNITDKIDQIIHDFVDKTLPDQGDNDNWWTGWRQWIPAGIGVTGVIIAVIALFCICKFVF.

Residues 1-32 (MGVTGILQLPRDRFKRTSFFLWVIILFQRTFS) form the signal peptide. Over 33–650 (IPLGVIHNST…NDNWWTGWRQ (618 aa)) the chain is Extracellular. N-linked (GlcNAc...) asparagine; by host glycosylation is present at Asn-40. Intrachain disulfides connect Cys-53/Cys-609, Cys-108/Cys-135, Cys-121/Cys-147, Cys-511/Cys-556, and Cys-601/Cys-608. The receptor-binding stretch occupies residues 54 to 201 (RDKLSSTNQL…DFFSSHPLRE (148 aa)). Residues Asn-204, Asn-228, Asn-238, Asn-257, Asn-268, Asn-296, Asn-317, Asn-333, Asn-346, Asn-386, and Asn-413 are each glycosylated (N-linked (GlcNAc...) asparagine; by host). The segment at 305 to 485 (ELSFTAVSNR…SGKLGLITNT (181 aa)) is mucin-like region. Positions 314–335 (RAKNISGQSPARTSSDPGTNTT) are enriched in polar residues. A disordered region spans residues 314-337 (RAKNISGQSPARTSSDPGTNTTTE). The disordered stretch occupies residues 370–478 (TISTSPQPPT…TGEESASSGK (109 aa)). Low complexity predominate over residues 414-427 (DSTASDTPPATTAA). Residues Asn-436, Asn-454, and Asn-462 are each glycosylated (N-linked (GlcNAc...) asparagine; by host). Residues 447–464 (ATTTSPQNHSETAGNNNT) show a composition bias toward polar residues. A fusion peptide region spans residues 524–539 (GAAIGLAWIPYFGPAA). Residues 554–595 (LICGLRQLANETTQALQLFLRATTELRTFSILNRKAIDFLLQ) adopt a coiled-coil conformation. An N-linked (GlcNAc...) asparagine; by host glycan is attached at Asn-563. Residues 615–634 (WTKNITDKIDQIIHDFVDKT) are a coiled coil. Residue Asn-618 is glycosylated (N-linked (GlcNAc...) asparagine; by host). Residues 651–671 (WIPAGIGVTGVIIAVIALFCI) traverse the membrane as a helical segment. Residues Cys-670 and Cys-672 are each lipidated (S-palmitoyl cysteine; by host). The Cytoplasmic portion of the chain corresponds to 672–676 (CKFVF).

The protein belongs to the filoviruses glycoprotein family. As to quaternary structure, homotrimer; each monomer consists of a GP1 and a GP2 subunit linked by disulfide bonds. The resulting peplomers (GP1,2) protrude from the virus surface as spikes. Interacts with host integrin alpha-V/ITGAV. Interacts with host CLEC10A. Binds also to host CD209 and CLEC4M/DC-SIGN(R). Interacts with host FOLR1. Interacts with BST2; this interaction inhibits the antiviral effect of BST2 and this allows viral release from infected cells. Interacts with host FCN1; this interaction enhances viral entry. Interacts with host TLR4; this interaction induces cell death in T-lymphocytes or proinflammatory cytokines and SOCS1 production in monocytes. Interacts with host entry receptor NPC1. In terms of assembly, GP1 and GP2delta are part of GP1,2delta soluble complexes released by ectodomain shedding. Post-translationally, the signal peptide region modulates GP's high mannose glycosylation, thereby determining the efficiency of the interactions with DC-SIGN(R). In terms of processing, N-glycosylated. O-glycosylated in the mucin-like region. Post-translationally, palmitoylation of GP2 is not required for its function. In terms of processing, specific enzymatic cleavages in vivo yield mature proteins. The precursor is processed into GP1 and GP2 by host cell furin in the trans Golgi, and maybe by other host proteases, to yield the mature GP1 and GP2 proteins. The cleavage site corresponds to the furin optimal cleavage sequence [KR]-X-[KR]-R. This cleavage does not seem to be required for function. After the internalization of the virus into cell endosomes, GP1 C-terminus is removed by the endosomal proteases cathepsin B, cathepsin L, or both, leaving a 19-kDa N-terminal fragment which is further digested by cathepsin B. Proteolytic processing of GP1,2 by host ADAM17 can remove the transmembrane anchor of GP2 and leads to shedding of complexes consisting in GP1 and truncated GP2 (GP1,2delta).

It is found in the virion membrane. It localises to the host cell membrane. The protein localises to the secreted. Trimeric GP1,2 complexes form the virion surface spikes and mediate the viral entry processes, with GP1 acting as the receptor-binding subunit and GP2 as the membrane fusion subunit. At later times of infection, down-regulates the expression of various host cell surface molecules that are essential for immune surveillance and cell adhesion. Down-modulates several integrins including ITGA1, ITGA2, ITGA3, ITGA4, ITGA5, ITGA6, ITGAV and ITGB1. This decrease in cell adhesion molecules may lead to cell detachment, contributing to the disruption of blood vessel integrity and hemorrhages developed during infection (cytotoxicity). Interacts with host TLR4 and thereby stimulates the differentiation and activation of monocytes leading to bystander death of T-lymphocytes. Down-regulates as well the function of host natural killer cells. Counteracts the antiviral effect of host BST2/tetherin that restricts release of progeny virions from infected cells. However, cooperates with VP40 and host BST2 to activate canonical NF-kappa-B pathway in a manner dependent on neddylation. Its function is as follows. Functions as a decoy for anti-GP1,2 antibodies thereby contributing to viral immune evasion. Interacts and activates host macrophages and dendritic cells inducing up-regulation of cytokine transcription. This effect is mediated throught activation of host TLR4. In terms of biological role, responsible for binding to the receptor(s) on target cells. Interacts with CD209/DC-SIGN and CLEC4M/DC-SIGNR which act as cofactors for virus entry into dendritic cells (DCs) and endothelial cells. Binding to the macrophage specific lectin CLEC10A also seems to enhance virus infectivity. Interaction with FOLR1/folate receptor alpha may be a cofactor for virus entry in some cell types, although results are contradictory. Members of the Tyro3 receptor tyrosine kinase family also seem to be cell entry factors in filovirus infection. Once attached, the virions are internalized through clathrin-dependent endocytosis and/or macropinocytosis. After internalization of the virus into the endosomes of the host cell, proteolysis of GP1 by two cysteine proteases, CTSB/cathepsin B and CTSL/cathepsin L removes the glycan cap and allows GP1 binding to the host entry receptor NPC1. NPC1-binding, Ca(2+) and acidic pH induce a conformational change of GP2, which unmasks its fusion peptide and permit membranes fusion. Functionally, acts as a class I viral fusion protein. Under the current model, the protein has at least 3 conformational states: pre-fusion native state, pre-hairpin intermediate state, and post-fusion hairpin state. During viral and target cell membrane fusion, the coiled coil regions (heptad repeats) assume a trimer-of-hairpins structure, positioning the fusion peptide in close proximity to the C-terminal region of the ectodomain. The formation of this structure appears to drive apposition and subsequent fusion of viral and target cell membranes. Responsible for penetration of the virus into the cell cytoplasm by mediating the fusion of the membrane of the endocytosed virus particle with the endosomal membrane. Low pH in endosomes induces an irreversible conformational change in GP2, releasing the fusion hydrophobic peptide. The sequence is that of Envelope glycoprotein (GP) from Zaire ebolavirus (strain Kikwit-95) (ZEBOV).